A 179-amino-acid polypeptide reads, in one-letter code: Crossover junction endodeoxyribonuclease RuvC (179 aa).

Residues Asp12, Glu72, and Asp144 contribute to the active site. Residues Asp12, Glu72, and Asp144 each coordinate Mg(2+).

It belongs to the RuvC family. In terms of assembly, homodimer which binds Holliday junction (HJ) DNA. The HJ becomes 2-fold symmetrical on binding to RuvC with unstacked arms; it has a different conformation from HJ DNA in complex with RuvA. In the full resolvosome a probable DNA-RuvA(4)-RuvB(12)-RuvC(2) complex forms which resolves the HJ. Requires Mg(2+) as cofactor.

It localises to the cytoplasm. The catalysed reaction is Endonucleolytic cleavage at a junction such as a reciprocal single-stranded crossover between two homologous DNA duplexes (Holliday junction).. The RuvA-RuvB-RuvC complex processes Holliday junction (HJ) DNA during genetic recombination and DNA repair. Endonuclease that resolves HJ intermediates. Cleaves cruciform DNA by making single-stranded nicks across the HJ at symmetrical positions within the homologous arms, yielding a 5'-phosphate and a 3'-hydroxyl group; requires a central core of homology in the junction. The consensus cleavage sequence is 5'-(A/T)TT(C/G)-3'. Cleavage occurs on the 3'-side of the TT dinucleotide at the point of strand exchange. HJ branch migration catalyzed by RuvA-RuvB allows RuvC to scan DNA until it finds its consensus sequence, where it cleaves and resolves the cruciform DNA. In Dechloromonas aromatica (strain RCB), this protein is Crossover junction endodeoxyribonuclease RuvC.